The primary structure comprises 405 residues: Solute carrier family 35 member E2A (405 aa).

The interval 1-22 (MSAAAKSQVPEEAAPGCEEEPK) is disordered. A run of 10 helical transmembrane segments spans residues 76–96 (LIYL…NKYI), 106–126 (MLGA…IFVP), 142–162 (FIMT…LGLV), 167–187 (VAVS…VIMS), 195–215 (TGLL…LCTA), 219–241 (SFNI…QNVF), 264–284 (AAAV…PVIG), 296–316 (IVLL…TAYA), 326–346 (FSVA…IVFG), and 347–367 (NKIT…VLLY). Positions 380-405 (SLVTATSRNPEDDTEPLVPQDSRQHH) are disordered.

The protein belongs to the TPT transporter family. SLC35E subfamily.

It is found in the membrane. Functionally, putative transporter. This Mus musculus (Mouse) protein is Solute carrier family 35 member E2A (Slc35e2a).